Consider the following 957-residue polypeptide: Nitrite reductase [NAD(P)H] large subunit (957 aa).

FAD is bound at residue 44–79; that stretch reads YDRVHLTEYFAGRSAESLSLVEGDFFTQHGIELRLS. 193–225 lines the NAD(+) pocket; it reads LREKISELGVGVHTSKATTEIVRNEQGLQLNFR. [2Fe-2S] cluster contacts are provided by Cys-423, Cys-425, Cys-457, and Cys-460. [4Fe-4S] cluster-binding residues include Cys-639, Cys-645, Cys-679, and Cys-683. Cys-683 lines the siroheme pocket.

It belongs to the nitrite and sulfite reductase 4Fe-4S domain family. As to quaternary structure, homodimer which associates with NirD. The cofactor is siroheme. It depends on [2Fe-2S] cluster as a cofactor. [4Fe-4S] cluster is required as a cofactor. FAD serves as cofactor.

The catalysed reaction is NH4(+) + 3 NADP(+) + 2 H2O = nitrite + 3 NADPH + 5 H(+). It carries out the reaction NH4(+) + 3 NAD(+) + 2 H2O = nitrite + 3 NADH + 5 H(+). It functions in the pathway nitrogen metabolism; nitrate reduction (assimilation). The chain is Nitrite reductase [NAD(P)H] large subunit (nasB) from Klebsiella oxytoca.